Reading from the N-terminus, the 328-residue chain is Methionine import ATP-binding protein MetN 1 (328 aa).

An ABC transporter domain is found at 2 to 241 (ISIERLSKTY…PLSRLGRSLL (240 aa)). 38–45 (GRSGAGKS) provides a ligand contact to ATP.

This sequence belongs to the ABC transporter superfamily. Methionine importer (TC 3.A.1.24) family. In terms of assembly, the complex is composed of two ATP-binding proteins (MetN), two transmembrane proteins (MetI) and a solute-binding protein (MetQ).

Its subcellular location is the cell inner membrane. The enzyme catalyses L-methionine(out) + ATP + H2O = L-methionine(in) + ADP + phosphate + H(+). It catalyses the reaction D-methionine(out) + ATP + H2O = D-methionine(in) + ADP + phosphate + H(+). In terms of biological role, part of the ABC transporter complex MetNIQ involved in methionine import. Responsible for energy coupling to the transport system. This Yersinia pestis bv. Antiqua (strain Nepal516) protein is Methionine import ATP-binding protein MetN 1.